A 398-amino-acid chain; its full sequence is Beta-1,4-galactosyltransferase 1 (398 aa).

Over 1–24 (MRLREPLLSGSAAMPGASLQRACR) the chain is Cytoplasmic. Residues 25–44 (LLVAVCALHLGVTLVYYLAG) form a helical; Signal-anchor for type II membrane protein membrane-spanning segment. Residues 45-398 (RDLSRLPQLV…QITVDIGTPS (354 aa)) are Lumenal-facing. A compositionally biased stretch (polar residues) spans 61–76 (QGGSNSAAAIGQSSGE). The interval 61-117 (QGGSNSAAAIGQSSGELRTGGARPPPPLGASSQPRPGGDSSPVVDSGPGPASNLTSV) is disordered. N-linked (GlcNAc...) asparagine glycosylation is present at Asn113. Cys130 and Cys172 are joined by a disulfide. Residues 183 to 187 (PFRNR), 222 to 224 (FNR), 249 to 250 (VD), and Trp310 each bind UDP-alpha-D-galactose. Cys243 and Cys262 are joined by a disulfide. Asp250 lines the Mn(2+) pocket. 312-315 (GEDD) provides a ligand contact to N-acetyl-D-glucosamine. Residue His343 coordinates Mn(2+). 343 to 346 (HSRD) serves as a coordination point for UDP-alpha-D-galactose. Arg355 serves as a coordination point for N-acetyl-D-glucosamine.

The protein belongs to the glycosyltransferase 7 family. As to quaternary structure, homodimer; and heterodimer with alpha-lactalbumin to form lactose synthase. Interacts (via N-terminal cytoplasmic domain) with UBE2Q1 (via N-terminus); the interaction is direct. It depends on Mn(2+) as a cofactor. Post-translationally, the soluble form derives from the membrane forms by proteolytic processing. Ubiquitously expressed, but at very low levels in fetal and adult brain.

The protein resides in the golgi apparatus. It is found in the golgi stack membrane. The protein localises to the cell membrane. It localises to the cell surface. Its subcellular location is the cell projection. The protein resides in the filopodium. It is found in the secreted. The catalysed reaction is D-glucose + UDP-alpha-D-galactose = lactose + UDP + H(+). It catalyses the reaction an N-acetyl-beta-D-glucosaminyl derivative + UDP-alpha-D-galactose = a beta-D-galactosyl-(1-&gt;4)-N-acetyl-beta-D-glucosaminyl derivative + UDP + H(+). The enzyme catalyses N-acetyl-D-glucosamine + UDP-alpha-D-galactose = beta-D-galactosyl-(1-&gt;4)-N-acetyl-D-glucosamine + UDP + H(+). It carries out the reaction a beta-D-GlcNAc-(1-&gt;3)-beta-D-Gal-(1-&gt;4)-beta-D-Glc-(1&lt;-&gt;1)-Cer(d18:1(4E)) + UDP-alpha-D-galactose = a neolactoside nLc4Cer(d18:1(4E)) + UDP + H(+). The catalysed reaction is a beta-D-glucosylceramide + UDP-alpha-D-galactose = a beta-D-galactosyl-(1-&gt;4)-beta-D-glucosyl-(1&lt;-&gt;1)-ceramide + UDP + H(+). It catalyses the reaction a neolactoside IV(3)-beta-GlcNAc-nLc4Cer + UDP-alpha-D-galactose = a neolactoside nLc6Cer + UDP + H(+). Its pathway is protein modification; protein glycosylation. Its function is as follows. The Golgi complex form catalyzes the production of lactose in the lactating mammary gland and could also be responsible for the synthesis of complex-type N-linked oligosaccharides in many glycoproteins as well as the carbohydrate moieties of glycolipids. In terms of biological role, the cell surface form functions as a recognition molecule during a variety of cell to cell and cell to matrix interactions, as those occurring during development and egg fertilization, by binding to specific oligosaccharide ligands on opposing cells or in the extracellular matrix. This chain is Beta-1,4-galactosyltransferase 1, found in Homo sapiens (Human).